A 395-amino-acid polypeptide reads, in one-letter code: Na(+)/H(+) antiporter NhaA (395 aa).

11 consecutive transmembrane segments (helical) span residues 15-35, 66-86, 101-121, 132-152, 161-181, 184-204, 219-239, 265-285, 301-321, 339-359, and 366-386; these read FLGS…AGFV, IDAW…ILEI, VALP…TYLL, GWAI…LALG, AWLM…IAVF, NALY…LIGA, CILL…AGVI, ALTP…NVGV, LGIM…ATLL, VFGL…IANL, and LVIP…LAGW.

Belongs to the NhaA Na(+)/H(+) (TC 2.A.33) antiporter family.

The protein localises to the cell inner membrane. The catalysed reaction is Na(+)(in) + 2 H(+)(out) = Na(+)(out) + 2 H(+)(in). Na(+)/H(+) antiporter that extrudes sodium in exchange for external protons. The polypeptide is Na(+)/H(+) antiporter NhaA (Gluconacetobacter diazotrophicus (strain ATCC 49037 / DSM 5601 / CCUG 37298 / CIP 103539 / LMG 7603 / PAl5)).